Reading from the N-terminus, the 449-residue chain is Chromosomal replication initiator protein DnaA (449 aa).

A domain I, interacts with DnaA modulators region spans residues 1–75 (MDTNNDIEKR…EILSQNKVGM (75 aa)). Residues 75-106 (MHLAHSVDVRIEVASKVHVSDHSNINYKATKS) form a domain II region. The interval 107–321 (SIKDSYTFEN…GAIIKISVNA (215 aa)) is domain III, AAA+ region. Residues G151, G153, K154, and T155 each contribute to the ATP site. A domain IV, binds dsDNA region spans residues 322–449 (NLMNAPIDLN…LNELNDKKQH (128 aa)).

This sequence belongs to the DnaA family. As to quaternary structure, oligomerizes as a right-handed, spiral filament on DNA at oriC.

The protein localises to the cytoplasm. Functionally, plays an essential role in the initiation and regulation of chromosomal replication. ATP-DnaA binds to the origin of replication (oriC) to initiate formation of the DNA replication initiation complex once per cell cycle. Binds the DnaA box (a 9 base pair repeat at the origin) and separates the double-stranded (ds)DNA. Forms a right-handed helical filament on oriC DNA; dsDNA binds to the exterior of the filament while single-stranded (ss)DNA is stabiized in the filament's interior. The ATP-DnaA-oriC complex binds and stabilizes one strand of the AT-rich DNA unwinding element (DUE), permitting loading of DNA polymerase. After initiation quickly degrades to an ADP-DnaA complex that is not apt for DNA replication. Binds acidic phospholipids. This is Chromosomal replication initiator protein DnaA from Helicobacter acinonychis (strain Sheeba).